Consider the following 511-residue polypeptide: V-type proton ATPase subunit B, brain isoform (511 aa).

Arginine 400 contacts ATP.

This sequence belongs to the ATPase alpha/beta chains family. As to quaternary structure, V-ATPase is a heteromultimeric enzyme made up of two complexes: the ATP-hydrolytic V1 complex and the proton translocation V0 complex. The V1 complex consists of three catalytic AB heterodimers that form a heterohexamer, three peripheral stalks each consisting of EG heterodimers, one central rotor including subunits D and F, and the regulatory subunits C and H. The proton translocation complex V0 consists of the proton transport subunit a, a ring of proteolipid subunits c9c'', rotary subunit d, subunits e and f, and the accessory subunits ATP6AP1/Ac45 and ATP6AP2/PRR.

The protein resides in the apical cell membrane. It localises to the melanosome. Its subcellular location is the cytoplasm. It is found in the cytoplasmic vesicle. The protein localises to the secretory vesicle. The protein resides in the synaptic vesicle membrane. It localises to the clathrin-coated vesicle membrane. In terms of biological role, non-catalytic subunit of the V1 complex of vacuolar(H+)-ATPase (V-ATPase), a multisubunit enzyme composed of a peripheral complex (V1) that hydrolyzes ATP and a membrane integral complex (V0) that translocates protons. V-ATPase is responsible for acidifying and maintaining the pH of intracellular compartments and in some cell types, is targeted to the plasma membrane, where it is responsible for acidifying the extracellular environment. In renal intercalated cells, can partially compensate the lack of ATP6V1B1 and mediate secretion of protons (H+) into the urine under base-line conditions but not in conditions of acid load. This is V-type proton ATPase subunit B, brain isoform (ATP6V1B2) from Pongo abelii (Sumatran orangutan).